Reading from the N-terminus, the 411-residue chain is Arginine deiminase (411 aa).

The active-site Amidino-cysteine intermediate is Cys401.

It belongs to the arginine deiminase family.

The protein resides in the cytoplasm. It catalyses the reaction L-arginine + H2O = L-citrulline + NH4(+). The protein operates within amino-acid degradation; L-arginine degradation via ADI pathway; carbamoyl phosphate from L-arginine: step 1/2. This Staphylococcus aureus (strain MRSA252) protein is Arginine deiminase.